Consider the following 469-residue polypeptide: UDP-N-acetylmuramate--L-alanine ligase (469 aa).

112–118 is a binding site for ATP; the sequence is GTHGKTT.

The protein belongs to the MurCDEF family.

The protein localises to the cytoplasm. The enzyme catalyses UDP-N-acetyl-alpha-D-muramate + L-alanine + ATP = UDP-N-acetyl-alpha-D-muramoyl-L-alanine + ADP + phosphate + H(+). It functions in the pathway cell wall biogenesis; peptidoglycan biosynthesis. In terms of biological role, cell wall formation. The protein is UDP-N-acetylmuramate--L-alanine ligase of Leptothrix cholodnii (strain ATCC 51168 / LMG 8142 / SP-6) (Leptothrix discophora (strain SP-6)).